The chain runs to 715 residues: Polyribonucleotide nucleotidyltransferase (715 aa).

Residues Asp-487 and Asp-493 each coordinate Mg(2+). Residues 554–613 (PRLYTFKINPEKIRDVIGKGGAVIRALTEETGTTIDIQDDGTITIAATSGEAAAAARSRI) enclose the KH domain. In terms of domain architecture, S1 motif spans 623–691 (GKIYEGTVLK…DRGRVKLSMK (69 aa)).

The protein belongs to the polyribonucleotide nucleotidyltransferase family. Requires Mg(2+) as cofactor.

The protein localises to the cytoplasm. The enzyme catalyses RNA(n+1) + phosphate = RNA(n) + a ribonucleoside 5'-diphosphate. Functionally, involved in mRNA degradation. Catalyzes the phosphorolysis of single-stranded polyribonucleotides processively in the 3'- to 5'-direction. The sequence is that of Polyribonucleotide nucleotidyltransferase from Dechloromonas aromatica (strain RCB).